Here is a 278-residue protein sequence, read N- to C-terminus: Protoheme IX farnesyltransferase (278 aa).

The next 9 helical transmembrane spans lie at 12 to 32 (VIWL…QTVD), 33 to 53 (WSKL…SAAF), 83 to 103 (ALVY…YLLG), 105 to 125 (LPGL…TIWL), 130 to 150 (WLNI…GYAL), 157 to 177 (LPAV…IWAL), 204 to 224 (VIIS…YLAF), 228 to 248 (LLGL…SILA), and 257 to 277 (MWKM…ALVF).

It belongs to the UbiA prenyltransferase family. Protoheme IX farnesyltransferase subfamily.

The protein resides in the cell membrane. The enzyme catalyses heme b + (2E,6E)-farnesyl diphosphate + H2O = Fe(II)-heme o + diphosphate. The protein operates within porphyrin-containing compound metabolism; heme O biosynthesis; heme O from protoheme: step 1/1. Converts heme B (protoheme IX) to heme O by substitution of the vinyl group on carbon 2 of heme B porphyrin ring with a hydroxyethyl farnesyl side group. This is Protoheme IX farnesyltransferase from Pyrobaculum islandicum (strain DSM 4184 / JCM 9189 / GEO3).